We begin with the raw amino-acid sequence, 1492 residues long: Neogenin (1492 aa).

The signal sequence occupies residues 1–36 (MAAEREAGRLLCTSSSRRCCPPPPLLLLLPLLLLLG). The Extracellular portion of the chain corresponds to 37–1136 (RPASGAAATK…PTSPLDSNML (1100 aa)). Ig-like C2-type domains lie at 63-158 (PFYF…AKLT), 163-249 (PRFT…AELK), 254-347 (PEEI…AELT), and 352-437 (PGFL…AQLI). Residue Asn84 is glycosylated (N-linked (GlcNAc...) asparagine). Intrachain disulfides connect Cys85/Cys140, Cys184/Cys232, and Cys281/Cys331. Asn221 carries N-linked (GlcNAc...) asparagine glycosylation. N-linked (GlcNAc...) asparagine glycosylation occurs at Asn337. Residues Cys373 and Cys421 are joined by a disulfide bond. Fibronectin type-III domains lie at 472-566 (APRD…TQPE), 572-662 (PAPN…TLSD), 667-762 (APQN…TFES), 772-862 (VPSS…RPHT), 887-986 (PPVG…LVPT), and 988-1085 (PPKD…TPKA). Residues Asn501 and Asn520 are each glycosylated (N-linked (GlcNAc...) asparagine). Residues Asn670 and Asn746 are each glycosylated (N-linked (GlcNAc...) asparagine). The N-linked (GlcNAc...) asparagine glycan is linked to Asn940. The tract at residues 1072–1128 (GPMSEAVQFRTPKADSSDKMPNDQALGSAGKGSRLPDLGSDYKPPMSGSNSPHGSPT) is disordered. Basic and acidic residues predominate over residues 1083–1092 (PKADSSDKMP). Positions 1118–1128 (SGSNSPHGSPT) are enriched in polar residues. Residues 1137 to 1157 (LVIIVSVGVITIVVVVVIAVF) traverse the membrane as a helical segment. Residues 1158 to 1492 (CTRRTTSHQK…MKDLNAITTA (335 aa)) lie on the Cytoplasmic side of the membrane. Disordered regions lie at residues 1205-1237 (PIDK…SMDS), 1266-1300 (PKMM…HSSS), and 1321-1396 (SMSL…FAVP). Phosphoserine occurs at positions 1209 and 1225. Over residues 1222–1237 (PRNSQDITPVDNSMDS) the composition is skewed to polar residues. Thr1229 carries the post-translational modification Phosphothreonine. Polar residues-rich tracts occupy residues 1321-1353 (SMSL…TCCT) and 1361-1380 (ATSS…QSLP). The residue at position 1432 (Ser1432) is a Phosphoserine. The residue at position 1435 (Thr1435) is a Phosphothreonine. Ser1463, Ser1465, and Ser1466 each carry phosphoserine.

This sequence belongs to the immunoglobulin superfamily. DCC family. As to quaternary structure, interacts with BMP2, BMP4, BMP6, and BMP7. Interacts with RGMA and RGMB. Interacts with MYO10. Widely expressed.

The protein resides in the cell membrane. In terms of biological role, multi-functional cell surface receptor regulating cell adhesion in many diverse developmental processes, including neural tube and mammary gland formation, myogenesis and angiogenesis. Receptor for members of the BMP, netrin, and repulsive guidance molecule (RGM) families. Netrin-Neogenin interactions result in a chemoattractive axon guidance response and cell-cell adhesion, the interaction between NEO1/Neogenin and RGMa and RGMb induces a chemorepulsive response. The sequence is that of Neogenin from Mus musculus (Mouse).